The sequence spans 339 residues: Methyltransferase ptaI (339 aa).

Belongs to the methyltransferase superfamily.

It participates in secondary metabolite biosynthesis. In terms of biological role, methyltransferase; part of the gene cluster that mediates the biosynthesis of pestheic acid, a diphenyl ether which is a biosynthetic precursor of the unique chloropupukeananes. The biosynthesis initiates from condensation of acetate and malonate units catalyzed by the non-reducing PKS ptaA. As the ptaA protein is TE/CLC domain-deficient, hydrolysis and Claisen cyclization of the polyketide could be catalyzed by ptaB containing a beta-lactamase domain. The ptaB protein might hydrolyze the thioester bond between the ACP of ptaA and the intermediate to release atrochrysone carboxylic acid, which is spontaneously dehydrated to form endocrocin anthrone. Endocrocin anthrone is then converted to endocrocin, catalyzed by the anthrone oxygenase ptaC. Spontaneous decarboxylation of endocrocin occurs to generate emodin. An O-methyltransferase (ptaH or ptaI) could methylate emodin to form physcion. PtaJ could then catalyze the oxidative cleavage of physcion, and rotation of the intermediate could then afford desmethylisosulochrin. PtaF, a putative NADH-dependent oxidoreductase, might also participate in the oxidative cleavage step. Desmethylisosulochrin is then transformed by another O-methyltransferase (ptaH or ptaI) to form isosulochrin. Chlorination of isosulochrin by ptaM in the cyclohexadienone B ring then produces chloroisosulochrin. PtaE is responsible for the oxidative coupling reactions of both benzophenones isosulouchrin and chloroisosulochrin to RES-1214-1 and pestheic acid respectively, regardless of chlorination. This is Methyltransferase ptaI from Pestalotiopsis fici (strain W106-1 / CGMCC3.15140).